Consider the following 303-residue polypeptide: Glucose-1-phosphate thymidylyltransferase (303 aa).

2 residues coordinate Mg(2+): aspartate 108 and aspartate 222.

This sequence belongs to the glucose-1-phosphate thymidylyltransferase family. Mg(2+) is required as a cofactor.

It catalyses the reaction dTTP + alpha-D-glucose 1-phosphate + H(+) = dTDP-alpha-D-glucose + diphosphate. In terms of biological role, catalyzes the formation of dTDP-glucose, from dTTP and glucose 1-phosphate, as well as its pyrophosphorolysis. Functionally, probably involved in the biosynthesis of the acarviose moiety of the alpha-glucosidase inhibitor acarbose. This chain is Glucose-1-phosphate thymidylyltransferase (acbA), found in Actinoplanes sp. (strain ATCC 31044 / CBS 674.73 / SE50/110).